Reading from the N-terminus, the 349-residue chain is Histidinol-phosphate aminotransferase (349 aa).

Residue Lys-206 is modified to N6-(pyridoxal phosphate)lysine.

The protein belongs to the class-II pyridoxal-phosphate-dependent aminotransferase family. Histidinol-phosphate aminotransferase subfamily. In terms of assembly, homodimer. The cofactor is pyridoxal 5'-phosphate.

It catalyses the reaction L-histidinol phosphate + 2-oxoglutarate = 3-(imidazol-4-yl)-2-oxopropyl phosphate + L-glutamate. The protein operates within amino-acid biosynthesis; L-histidine biosynthesis; L-histidine from 5-phospho-alpha-D-ribose 1-diphosphate: step 7/9. The protein is Histidinol-phosphate aminotransferase of Streptococcus mutans serotype c (strain ATCC 700610 / UA159).